We begin with the raw amino-acid sequence, 593 residues long: UvrABC system protein C (593 aa).

The region spanning 14 to 91 is the GIY-YIG domain; that stretch reads DKPGCYLMKN…IKEHDPRYNV (78 aa). The UVR domain occupies 196 to 231; the sequence is EEMKQTLTEKMLQAAENMEFERAKEYRDQIKSIEAV.

The protein belongs to the UvrC family. In terms of assembly, interacts with UvrB in an incision complex.

The protein resides in the cytoplasm. The UvrABC repair system catalyzes the recognition and processing of DNA lesions. UvrC both incises the 5' and 3' sides of the lesion. The N-terminal half is responsible for the 3' incision and the C-terminal half is responsible for the 5' incision. The sequence is that of UvrABC system protein C from Brevibacillus brevis (strain 47 / JCM 6285 / NBRC 100599).